The primary structure comprises 385 residues: S-adenosylmethionine synthase (385 aa).

His15 is a binding site for ATP. Asp17 contacts Mg(2+). Glu43 contributes to the K(+) binding site. Residues Glu56 and Gln99 each contribute to the L-methionine site. The flexible loop stretch occupies residues 99-109; sequence QSVDIAQGVDR. Residues 164-166, 230-231, Asp239, 245-246, and Lys266 each bind ATP; these read DAK, RF, and RK. Asp239 is a binding site for L-methionine. Lys270 contributes to the L-methionine binding site.

This sequence belongs to the AdoMet synthase family. In terms of assembly, homotetramer; dimer of dimers. Mg(2+) serves as cofactor. It depends on K(+) as a cofactor.

It is found in the cytoplasm. The catalysed reaction is L-methionine + ATP + H2O = S-adenosyl-L-methionine + phosphate + diphosphate. It participates in amino-acid biosynthesis; S-adenosyl-L-methionine biosynthesis; S-adenosyl-L-methionine from L-methionine: step 1/1. Its function is as follows. Catalyzes the formation of S-adenosylmethionine (AdoMet) from methionine and ATP. The overall synthetic reaction is composed of two sequential steps, AdoMet formation and the subsequent tripolyphosphate hydrolysis which occurs prior to release of AdoMet from the enzyme. The polypeptide is S-adenosylmethionine synthase (Alkalilimnicola ehrlichii (strain ATCC BAA-1101 / DSM 17681 / MLHE-1)).